The primary structure comprises 123 residues: UPF0102 protein Psyr_4114 (123 aa).

It belongs to the UPF0102 family.

This is UPF0102 protein Psyr_4114 from Pseudomonas syringae pv. syringae (strain B728a).